A 74-amino-acid polypeptide reads, in one-letter code: Brevinin-2Tb (74 aa).

Positions 1-22 (MFTMKKSLLLFFFLGTISLSLC) are cleaved as a signal peptide. The propeptide occupies 23-40 (QEERNADEDDGEMTEEEK). Cysteines 68 and 74 form a disulfide.

The protein belongs to the frog skin active peptide (FSAP) family. Brevinin subfamily. Expressed by the skin glands.

The protein localises to the secreted. In terms of biological role, antimicrobial peptide. This Rana temporaria (European common frog) protein is Brevinin-2Tb.